Reading from the N-terminus, the 263-residue chain is NADH dehydrogenase [ubiquinone] iron-sulfur protein 3, mitochondrial (263 aa).

Residues 1–35 (MVAAVARLWWRGLLGASALTRGAGRPSVLLLPVRR) constitute a mitochondrion transit peptide.

This sequence belongs to the complex I 30 kDa subunit family. In terms of assembly, core subunit of respiratory chain NADH dehydrogenase (Complex I) which is composed of 45 different subunits. Interacts with NDUFAF3. Interacts with RAB5IF. Found in subcomplexes containing subunits NDUFS2, MT-ND1 and NDUFA13.

The protein localises to the mitochondrion inner membrane. The catalysed reaction is a ubiquinone + NADH + 5 H(+)(in) = a ubiquinol + NAD(+) + 4 H(+)(out). Core subunit of the mitochondrial membrane respiratory chain NADH dehydrogenase (Complex I) which catalyzes electron transfer from NADH through the respiratory chain, using ubiquinone as an electron acceptor. Essential for the catalytic activity and assembly of complex I. This is NADH dehydrogenase [ubiquinone] iron-sulfur protein 3, mitochondrial (NDUFS3) from Gorilla gorilla gorilla (Western lowland gorilla).